We begin with the raw amino-acid sequence, 110 residues long: Large ribosomal subunit protein uL22 (110 aa).

It belongs to the universal ribosomal protein uL22 family. As to quaternary structure, part of the 50S ribosomal subunit.

In terms of biological role, this protein binds specifically to 23S rRNA; its binding is stimulated by other ribosomal proteins, e.g. L4, L17, and L20. It is important during the early stages of 50S assembly. It makes multiple contacts with different domains of the 23S rRNA in the assembled 50S subunit and ribosome. Its function is as follows. The globular domain of the protein is located near the polypeptide exit tunnel on the outside of the subunit, while an extended beta-hairpin is found that lines the wall of the exit tunnel in the center of the 70S ribosome. The chain is Large ribosomal subunit protein uL22 from Hydrogenovibrio crunogenus (strain DSM 25203 / XCL-2) (Thiomicrospira crunogena).